Here is a 968-residue protein sequence, read N- to C-terminus: RNA polymerase-associated protein RapA (968 aa).

The Helicase ATP-binding domain occupies 164 to 334 (DVGRRHAPRV…FARLRLLDPN (171 aa)). Position 177–184 (177–184 (DEVGLGKT)) interacts with ATP. The DEAH box signature appears at 280–283 (DEAH). The 173-residue stretch at 490–662 (RVEWLMGYLT…YLASPDQTEG (173 aa)) folds into the Helicase C-terminal domain.

This sequence belongs to the SNF2/RAD54 helicase family. RapA subfamily. In terms of assembly, interacts with the RNAP. Has a higher affinity for the core RNAP than for the holoenzyme. Its ATPase activity is stimulated by binding to RNAP.

Functionally, transcription regulator that activates transcription by stimulating RNA polymerase (RNAP) recycling in case of stress conditions such as supercoiled DNA or high salt concentrations. Probably acts by releasing the RNAP, when it is trapped or immobilized on tightly supercoiled DNA. Does not activate transcription on linear DNA. Probably not involved in DNA repair. The chain is RNA polymerase-associated protein RapA from Shigella boydii serotype 18 (strain CDC 3083-94 / BS512).